Here is a 169-residue protein sequence, read N- to C-terminus: Peptide deformylase (169 aa).

2 residues coordinate Fe cation: Cys91 and His133. Residue Glu134 is part of the active site. His137 contributes to the Fe cation binding site.

It belongs to the polypeptide deformylase family. Fe(2+) is required as a cofactor.

It carries out the reaction N-terminal N-formyl-L-methionyl-[peptide] + H2O = N-terminal L-methionyl-[peptide] + formate. Removes the formyl group from the N-terminal Met of newly synthesized proteins. Requires at least a dipeptide for an efficient rate of reaction. N-terminal L-methionine is a prerequisite for activity but the enzyme has broad specificity at other positions. The chain is Peptide deformylase from Enterobacter sp. (strain 638).